A 1402-amino-acid chain; its full sequence is DNA-directed RNA polymerase subunit beta' (1402 aa).

Zn(2+) contacts are provided by Cys71, Cys73, Cys86, and Cys89. Residues Asp462, Asp464, and Asp466 each coordinate Mg(2+). Residues Cys811, Cys885, Cys892, and Cys895 each coordinate Zn(2+). The disordered stretch occupies residues 1379-1402; the sequence is RKGTGAGSANQMLQDMTDQVPAAE. The span at 1385–1395 shows a compositional bias: polar residues; sequence GSANQMLQDMT.

The protein belongs to the RNA polymerase beta' chain family. In terms of assembly, the RNAP catalytic core consists of 2 alpha, 1 beta, 1 beta' and 1 omega subunit. When a sigma factor is associated with the core the holoenzyme is formed, which can initiate transcription. Mg(2+) serves as cofactor. The cofactor is Zn(2+).

The catalysed reaction is RNA(n) + a ribonucleoside 5'-triphosphate = RNA(n+1) + diphosphate. Functionally, DNA-dependent RNA polymerase catalyzes the transcription of DNA into RNA using the four ribonucleoside triphosphates as substrates. In Agrobacterium fabrum (strain C58 / ATCC 33970) (Agrobacterium tumefaciens (strain C58)), this protein is DNA-directed RNA polymerase subunit beta'.